Consider the following 637-residue polypeptide: Early transcription factor 70 kDa subunit (637 aa).

In terms of domain architecture, Helicase ATP-binding spans 32 to 185 (RTIIDENRSV…GHIIDLMSEE (154 aa)). 45–52 (HIMGSGKT) contributes to the ATP binding site. The DEXH box signature appears at 135–138 (DEAH). The Helicase C-terminal domain maps to 327–507 (KFKYFINRIQ…VLPFDIKKLL (181 aa)).

This sequence belongs to the helicase family. VETF subfamily. As to quaternary structure, heterodimer of a 70 kDa and a 82 kDa subunit. Part of the early transcription complex composed of ETF, RAP94/OPG109, and the DNA-directed RNA polymerase.

The protein localises to the virion. Functionally, acts with RNA polymerase to initiate transcription from early gene promoters. Is recruited by the RPO-associated protein of 94 kDa RAP94/OPG109 to form the early transcription complex, which also contains the core RNA polymerase. ETF heterodimer binds to early gene promoters. The chain is Early transcription factor 70 kDa subunit (OPG118) from Vaccinia virus (strain Ankara) (VACV).